A 287-amino-acid chain; its full sequence is MIFIFISLFAKIFFNYNDFFTNSHVKIMAKSLLNYQFHQVKQTINTPVLIFIHGLFGDMDNLGVIARAFSEHYSILRIDLRNHGHSFHSEKMNYQLMAEDVIAVIRHLNLSKVILIGHSMGGKTAMKITALCPELVEKLIVIDMSPMPYEGFGHKDVFNGLFAVKNAKPENRQQAKPILKQEINDEDVVQFMLKSFDVNSADCFRFNLTALFNNYANIMDWEKVRVFTPTLFIKGGNSSYIKIENSEKILEQFPNATAFTINGSGHWVHAEKPDFVIRAIKRFLNKN.

Residues 47-273 (PVLIFIHGLF…SGHWVHAEKP (227 aa)) enclose the AB hydrolase-1 domain. Active-site residues include Ser119 and His266.

This sequence belongs to the DmpD/TodF/XylF esterase family.

This chain is Putative esterase/lipase HI_0193, found in Haemophilus influenzae (strain ATCC 51907 / DSM 11121 / KW20 / Rd).